The sequence spans 434 residues: GTPase Obg (434 aa).

The Obg domain occupies 2-160; that stretch reads PTFVDQTKIE…RVLRLELKLL (159 aa). Residues 161–334 form the OBG-type G domain; sequence ADVGLVGFPS…LMNDTATLVE (174 aa). Residues 167-174, 192-196, 214-217, 284-287, and 315-317 contribute to the GTP site; these read GFPSVGKS, FTTLT, DLPG, SQMD, and SSV. S174 and T194 together coordinate Mg(2+). Residues 356-434 form the OCT domain; that stretch reads YKAPQKNEFT…IGKFVFEFVQ (79 aa).

The protein belongs to the TRAFAC class OBG-HflX-like GTPase superfamily. OBG GTPase family. Monomer. Mg(2+) serves as cofactor.

It localises to the cytoplasm. An essential GTPase which binds GTP, GDP and possibly (p)ppGpp with moderate affinity, with high nucleotide exchange rates and a fairly low GTP hydrolysis rate. Plays a role in control of the cell cycle, stress response, ribosome biogenesis and in those bacteria that undergo differentiation, in morphogenesis control. The protein is GTPase Obg of Lactobacillus helveticus (strain DPC 4571).